Reading from the N-terminus, the 567-residue chain is PHD finger protein 1 (567 aa).

Residues 1–31 (MAQPPRLSRSGASSLWDPASPAPTSGPRPRL) form a disordered region. One can recognise a Tudor domain in the interval 29–86 (PRLWEGQDVLARWTDGLLYLGTIKKVDSAREVCLVQFEDDSQFLVLWKDISPAALPGE). 2 consecutive PHD-type zinc fingers follow at residues 87–142 (ELLC…CVFA) and 186–240 (QSYC…CRGG). Disordered regions lie at residues 333–441 (ARMP…TDAR) and 455–537 (HPSA…GYLS). The residue at position 360 (Gly360) is a Phosphoserine. Basic and acidic residues predominate over residues 371 to 386 (PEPEPLRRRQKGKVEE). Phosphoserine is present on Ser420. Low complexity-rich tracts occupy residues 423-433 (PNQSYQGSSGY), 456-470 (PSAS…SGPP), and 488-510 (SAPH…LPRR). Gly residues predominate over residues 524–534 (GTGGGVRGGVG).

The protein belongs to the Polycomblike family. Interacts with CHMP1. Associated component of the PRC2 complex. Interacts with p53/TP53. Highest levels in heart, skeletal muscle, and pancreas, lower levels in brain, placenta, lung, liver and kidney.

It localises to the nucleus. The protein localises to the cytoplasm. Its subcellular location is the cytoskeleton. It is found in the microtubule organizing center. The protein resides in the centrosome. Functionally, polycomb group (PcG) that specifically binds histone H3 trimethylated at 'Lys-36' (H3K36me3) and recruits the PRC2 complex. Involved in DNA damage response and is recruited at double-strand breaks (DSBs). Acts by binding to H3K36me3, a mark for transcriptional activation, and recruiting the PRC2 complex: it is however unclear whether recruitment of the PRC2 complex to H3K36me3 leads to enhance or inhibit H3K27me3 methylation mediated by the PRC2 complex. According to some reports, PRC2 recruitment by PHF1 promotes H3K27me3 and subsequent gene silencing by inducing spreading of PRC2 and H3K27me3 into H3K36me3 loci. According to another report, PHF1 recruits the PRC2 complex at double-strand breaks (DSBs) and inhibits the activity of PRC2. Regulates p53/TP53 stability and prolonges its turnover: may act by specifically binding to a methylated from of p53/TP53. The polypeptide is PHD finger protein 1 (PHF1) (Homo sapiens (Human)).